The following is a 709-amino-acid chain: Polyribonucleotide nucleotidyltransferase (709 aa).

Mg(2+)-binding residues include Asp-486 and Asp-492. A KH domain is found at 553 to 612 (PRIHTIKINPDKIKDVIGKGGSVIRALTEETGTTIEIEDDGTVKIAATDGEKAKHAISRI). One can recognise an S1 motif domain in the interval 622-690 (ARIYTGKVTR…RQGRVRLSIK (69 aa)).

Belongs to the polyribonucleotide nucleotidyltransferase family. In terms of assembly, component of the RNA degradosome, which is a multiprotein complex involved in RNA processing and mRNA degradation. Mg(2+) serves as cofactor.

It localises to the cytoplasm. It catalyses the reaction RNA(n+1) + phosphate = RNA(n) + a ribonucleoside 5'-diphosphate. Functionally, involved in mRNA degradation. Catalyzes the phosphorolysis of single-stranded polyribonucleotides processively in the 3'- to 5'-direction. The chain is Polyribonucleotide nucleotidyltransferase from Photorhabdus laumondii subsp. laumondii (strain DSM 15139 / CIP 105565 / TT01) (Photorhabdus luminescens subsp. laumondii).